Consider the following 251-residue polypeptide: Low molecular mass lipoprotein PBMHPC-21 (251 aa).

A signal peptide spans 1–16; sequence MKFVVVFASCVLAVSA.

The protein belongs to the 30 kDa lipoprotein family.

The protein resides in the secreted. This chain is Low molecular mass lipoprotein PBMHPC-21, found in Bombyx mori (Silk moth).